A 190-amino-acid polypeptide reads, in one-letter code: MSGLRPALSTFLFLLLITGGVYPLLTTALGQWWFPWQANGSLIREGDTVRGSALIGQNFTGNGYFHGRPSATAEMPYNPQASGGSNLAVSNPELDKQIAARVAALRAANPDASTSVPVELVTASASGLDNNITPQAAAWQIPRVAKARNLSVEQLTQLIAKYSQQPLVNYIGQPVVNIVELNLALDKLDE.

The helical transmembrane segment at 10–30 (TFLFLLLITGGVYPLLTTALG) threads the bilayer.

It belongs to the KdpC family. As to quaternary structure, the system is composed of three essential subunits: KdpA, KdpB and KdpC.

Its subcellular location is the cell inner membrane. Its function is as follows. Part of the high-affinity ATP-driven potassium transport (or Kdp) system, which catalyzes the hydrolysis of ATP coupled with the electrogenic transport of potassium into the cytoplasm. This subunit acts as a catalytic chaperone that increases the ATP-binding affinity of the ATP-hydrolyzing subunit KdpB by the formation of a transient KdpB/KdpC/ATP ternary complex. This chain is Potassium-transporting ATPase KdpC subunit, found in Escherichia coli O7:K1 (strain IAI39 / ExPEC).